The primary structure comprises 433 residues: Voltage-gated potassium channel regulatory subunit KCNG3 (433 aa).

Residues 1–165 (MTFGRGGAAS…RTFEEPTSSL (165 aa)) are Cytoplasmic-facing. Residues 166–187 (AAQILASVSVVFVIVSMVVLCA) form a helical membrane-spanning segment. Over 188-217 (STLPDWRAAVADNRSLDDRSRYSASPGREP) the chain is Extracellular. The chain crosses the membrane as a helical span at residues 218-239 (SGIIEAICIGWFTAECIVRFIV). Over 240–250 (SKNKCEFVKRP) the chain is Cytoplasmic. A helical transmembrane segment spans residues 251-271 (LNIIDLLAITPYYISVLMTVF). At 272–281 (TGENSQLQRA) the chain is on the extracellular side. A helical; Voltage-sensor membrane pass occupies residues 282 to 302 (GVTLRVLRMMRIFWVIKLARH). The Cytoplasmic portion of the chain corresponds to 303-317 (FIGLQTLGLTLKRCY). A helical membrane pass occupies residues 318-339 (REMAMLLVFICVAMAIFSALSQ). The Extracellular segment spans residues 340 to 357 (LLEHGLDLETSNKDFASI). The helical intramembrane region spans 358-369 (PAACWWVIISMT). Residues 370–375 (TVGYGD) carry the Selectivity filter motif. Residues 370–377 (TVGYGDMY) lie within the membrane without spanning it. Topologically, residues 378–384 (PITVPGR) are extracellular. The helical transmembrane segment at 385-413 (ILGGVCVVSGIVLLALPITFIYHSFVQCY) threads the bilayer. Residues 414 to 433 (HELKFRSARYSRSLSAEFLN) are Cytoplasmic-facing.

This sequence belongs to the potassium channel family. G (TC 1.A.1.2) subfamily. Kv6.3/KCNG3 sub-subfamily. In terms of assembly, heterotetramer with KCNB1. Does not form homomultimers.

It localises to the cell membrane. The protein localises to the cytoplasm. Its function is as follows. Regulatory subunit of the voltage-gated potassium (Kv) channel which, when coassembled with KCNB1, modulates the kinetics parameters of the heterotetrameric channel namely the inactivation and deactivation rate. Potassium channel subunit that does not form functional channels by itself. Reduces the deactivation rate. Moderately acceleratee activation. The polypeptide is Voltage-gated potassium channel regulatory subunit KCNG3 (Mus musculus (Mouse)).